A 390-amino-acid chain; its full sequence is Imidazolonepropionase (390 aa).

2 residues coordinate Fe(3+): histidine 71 and histidine 73. Residues histidine 71 and histidine 73 each contribute to the Zn(2+) site. 4-imidazolone-5-propanoate is bound by residues arginine 80, tyrosine 138, and histidine 165. Residue tyrosine 138 coordinates N-formimidoyl-L-glutamate. Histidine 228 contacts Fe(3+). Residue histidine 228 participates in Zn(2+) binding. Residue glutamine 231 coordinates 4-imidazolone-5-propanoate. Aspartate 302 contributes to the Fe(3+) binding site. A Zn(2+)-binding site is contributed by aspartate 302. Residues asparagine 304 and glycine 306 each coordinate N-formimidoyl-L-glutamate. Residue serine 307 coordinates 4-imidazolone-5-propanoate.

This sequence belongs to the metallo-dependent hydrolases superfamily. HutI family. Requires Zn(2+) as cofactor. The cofactor is Fe(3+).

Its subcellular location is the cytoplasm. It carries out the reaction 4-imidazolone-5-propanoate + H2O = N-formimidoyl-L-glutamate. It participates in amino-acid degradation; L-histidine degradation into L-glutamate; N-formimidoyl-L-glutamate from L-histidine: step 3/3. Its function is as follows. Catalyzes the hydrolytic cleavage of the carbon-nitrogen bond in imidazolone-5-propanoate to yield N-formimidoyl-L-glutamate. It is the third step in the universal histidine degradation pathway. The protein is Imidazolonepropionase of Streptomyces griseus subsp. griseus (strain JCM 4626 / CBS 651.72 / NBRC 13350 / KCC S-0626 / ISP 5235).